A 381-amino-acid polypeptide reads, in one-letter code: Alanine racemase, catabolic (381 aa).

Lysine 55 functions as the Proton acceptor; specific for D-alanine in the catalytic mechanism. The residue at position 55 (lysine 55) is an N6-(pyridoxal phosphate)lysine. Arginine 154 contributes to the substrate binding site. Tyrosine 276 serves as the catalytic Proton acceptor; specific for L-alanine. Substrate is bound at residue methionine 322.

Belongs to the alanine racemase family. Requires pyridoxal 5'-phosphate as cofactor.

It carries out the reaction L-alanine = D-alanine. Isomerizes L-alanine to D-alanine which is then oxidized to pyruvate by DadA. The polypeptide is Alanine racemase, catabolic (dadB) (Mesorhizobium japonicum (strain LMG 29417 / CECT 9101 / MAFF 303099) (Mesorhizobium loti (strain MAFF 303099))).